The sequence spans 505 residues: Lysine--tRNA ligase (505 aa).

The span at 1–11 shows a compositional bias: polar residues; sequence MSDQQLDQPSL. The tract at residues 1–23 is disordered; it reads MSDQQLDQPSLSHEERQHEENKL. A compositionally biased stretch (basic and acidic residues) spans 12–23; that stretch reads SHEERQHEENKL. Residues glutamate 415 and glutamate 422 each contribute to the Mg(2+) site.

Belongs to the class-II aminoacyl-tRNA synthetase family. Homodimer. Mg(2+) serves as cofactor.

The protein localises to the cytoplasm. It carries out the reaction tRNA(Lys) + L-lysine + ATP = L-lysyl-tRNA(Lys) + AMP + diphosphate. In Ectopseudomonas mendocina (strain ymp) (Pseudomonas mendocina), this protein is Lysine--tRNA ligase.